Here is a 432-residue protein sequence, read N- to C-terminus: Amino-acid acetyltransferase (432 aa).

An N-acetyltransferase domain is found at 286–425; the sequence is ELVREAAIED…ASLYNYQRNS (140 aa).

It belongs to the acetyltransferase family. ArgA subfamily.

Its subcellular location is the cytoplasm. It catalyses the reaction L-glutamate + acetyl-CoA = N-acetyl-L-glutamate + CoA + H(+). Its pathway is amino-acid biosynthesis; L-arginine biosynthesis; N(2)-acetyl-L-ornithine from L-glutamate: step 1/4. The chain is Amino-acid acetyltransferase from Pseudomonas fluorescens (strain Pf0-1).